The primary structure comprises 235 residues: uncharacterized protein (235 aa).

The tract at residues 1–98 (MDTKLSVTGA…NKKNTLHYSK (98 aa)) is disordered. Residues lysine 16 and lysine 35 each participate in a glycyl lysine isopeptide (Lys-Gly) (interchain with G-Cter in ubiquitin) cross-link. Residues 38–50 (NGNKKRNKNRNRN) show a composition bias toward basic residues. A compositionally biased stretch (basic and acidic residues) spans 51 to 60 (KKTETKEQNE).

This is an uncharacterized protein from Saccharomyces cerevisiae (strain ATCC 204508 / S288c) (Baker's yeast).